Consider the following 1049-residue polypeptide: Protein phosphatase Slingshot homolog 1 (1049 aa).

The span at 1 to 12 shows a compositional bias: polar residues; it reads MALVTLQRSPTP. Positions 1-28 are disordered; the sequence is MALVTLQRSPTPSAASSSASNSELEAGS. Ala-2 carries the post-translational modification N-acetylalanine. Residues 13–25 show a composition bias toward low complexity; that stretch reads SAASSSASNSELE. Ser-37 and Ser-57 each carry phosphoserine. A DEK-C domain is found at 249 to 304; it reads ERTERLIKAKLRSIMMSQDLENVTSKEIRNELEKQMNCNLKELKEFIDNEMLLILG. The Tyrosine-protein phosphatase domain maps to 308–449; that stretch reads KPSLIFDHLY…LSEYEGILDA (142 aa). The active-site Phosphocysteine intermediate is the Cys-393. Positions 456–499 are disordered; sequence KLWRQQTDSSLQQPVDDPAGPGDFLPETPDGTPESQLPFLDDAA. The segment covering 458–468 has biased composition (polar residues); it reads WRQQTDSSLQQ. Ser-515 is subject to Phosphoserine. Disordered stretches follow at residues 544–603, 693–787, 825–899, and 923–955; these read AAPP…RWGQ, HLAS…KPAK, HTKE…KSPP, and PTSS…KQRT. The span at 564 to 573 shows a compositional bias: basic and acidic residues; that stretch reads CEKDVKKKLE. Ser-576 carries the phosphoserine modification. Over residues 731–742 the composition is skewed to low complexity; it reads GAALEPPASLLE. A compositionally biased stretch (basic and acidic residues) spans 772 to 787; sequence VIKEESSPKKDMKPAK. Ser-897 is modified (phosphoserine). The interval 897–1049 is interaction with YWHAG; it reads SPPPFFYRLD…LKSPSWMSKS (153 aa). The span at 925–943 shows a compositional bias: low complexity; the sequence is SSSMSSNLTRSSSSDSIHS. Ser-978 carries the phosphoserine modification. The interval 989–1049 is disordered; it reads TEDLSSEADP…LKSPSWMSKS (61 aa). Over residues 1001–1013 the composition is skewed to polar residues; that stretch reads VADSQDTTLSESS.

The protein belongs to the protein-tyrosine phosphatase family. Interacts with actin and this stimulates phosphatase activity. Also interacts with LIMK1 and with the 14-3-3 proteins YWHAB, YWHAG, YWHAQ, and YWHAZ. Interaction with 14-3-3 proteins inhibits phosphatase activity and also blocks recruitment to lamellipodia and stimulation by actin. Phosphorylated. Inhibitory phosphorylation by PAK4 promotes binding to YWHAZ. Phosphorylation at Ser-978 is decreased by stimuli which promote actin reorganization and lamellipodia formation. Can be dephosphorylated and activated by PPP3CA/calcineurin A. Phosphorylation decreases immediately prior to telophase.

The protein resides in the cytoplasm. It localises to the cytoskeleton. The protein localises to the cell projection. It is found in the lamellipodium. Its subcellular location is the cleavage furrow. The protein resides in the midbody. The catalysed reaction is O-phospho-L-tyrosyl-[protein] + H2O = L-tyrosyl-[protein] + phosphate. It catalyses the reaction O-phospho-L-seryl-[protein] + H2O = L-seryl-[protein] + phosphate. The enzyme catalyses O-phospho-L-threonyl-[protein] + H2O = L-threonyl-[protein] + phosphate. Its function is as follows. Protein phosphatase which regulates actin filament dynamics. Dephosphorylates and activates the actin binding/depolymerizing factor cofilin, which subsequently binds to actin filaments and stimulates their disassembly. Inhibitory phosphorylation of cofilin is mediated by LIMK1, which may also be dephosphorylated and inactivated by this protein. The chain is Protein phosphatase Slingshot homolog 1 from Homo sapiens (Human).